The sequence spans 421 residues: 4-hydroxy-3-methylbut-2-en-1-yl diphosphate synthase (flavodoxin) (421 aa).

Residues Cys311, Cys314, Cys357, and Glu364 each contribute to the [4Fe-4S] cluster site.

The protein belongs to the IspG family. Requires [4Fe-4S] cluster as cofactor.

The enzyme catalyses (2E)-4-hydroxy-3-methylbut-2-enyl diphosphate + oxidized [flavodoxin] + H2O + 2 H(+) = 2-C-methyl-D-erythritol 2,4-cyclic diphosphate + reduced [flavodoxin]. Its pathway is isoprenoid biosynthesis; isopentenyl diphosphate biosynthesis via DXP pathway; isopentenyl diphosphate from 1-deoxy-D-xylulose 5-phosphate: step 5/6. Its function is as follows. Converts 2C-methyl-D-erythritol 2,4-cyclodiphosphate (ME-2,4cPP) into 1-hydroxy-2-methyl-2-(E)-butenyl 4-diphosphate. This Xanthomonas campestris pv. campestris (strain 8004) protein is 4-hydroxy-3-methylbut-2-en-1-yl diphosphate synthase (flavodoxin).